We begin with the raw amino-acid sequence, 372 residues long: Cytochrome b (372 aa).

4 consecutive transmembrane segments (helical) span residues 25–45, 69–90, 105–125, and 170–190; these read FGSMLLTCLILQIMTGFFLAI, WIMQNLHAIGASLFFICIYIHI, WLSGTTLLIILMATAFFGYVL, and FFALHFILPFTIISLSSIHII. 2 residues coordinate heme b: H75 and H89. H174 and H188 together coordinate heme b. H193 provides a ligand contact to a ubiquinone. The next 4 helical transmembrane spans lie at 218–238, 280–300, 312–332, and 339–358; these read YKDMLMIIIMTAILFLILSFS, LGGTLALVMSVMILTTAPFTH, LSQIVFWTLIATFITITWTAT, and FISISQTASIFYFSFFIMNP.

The protein belongs to the cytochrome b family. The cytochrome bc1 complex contains 3 respiratory subunits (MT-CYB, CYC1 and UQCRFS1), 2 core proteins (UQCRC1 and UQCRC2) and probably 6 low-molecular weight proteins. Heme b is required as a cofactor.

The protein localises to the mitochondrion inner membrane. Component of the ubiquinol-cytochrome c reductase complex (complex III or cytochrome b-c1 complex) that is part of the mitochondrial respiratory chain. The b-c1 complex mediates electron transfer from ubiquinol to cytochrome c. Contributes to the generation of a proton gradient across the mitochondrial membrane that is then used for ATP synthesis. The protein is Cytochrome b (MT-CYB) of Walterinnesia aegyptia (Desert black snake).